A 49-amino-acid chain; its full sequence is Large ribosomal subunit protein bL33 (49 aa).

The protein belongs to the bacterial ribosomal protein bL33 family.

The sequence is that of Large ribosomal subunit protein bL33 from Heliobacterium modesticaldum (strain ATCC 51547 / Ice1).